The chain runs to 406 residues: Olfactomedin-like protein 3 (406 aa).

An N-terminal signal peptide occupies residues 1 to 21; the sequence is MGPSAPLLLLFFLSWTGPLQG. The stretch at 25–101 forms a coiled coil; that stretch reads HLVEYMERRL…REVDYLETQN (77 aa). The Olfactomedin-like domain occupies 134-401; sequence DCSYTVAQVR…QIVYKLEMKK (268 aa). A disulfide bridge connects residues Cys135 and Cys328. Residues Asn177 and Asn248 are each glycosylated (N-linked (GlcNAc...) asparagine).

It belongs to the OLFML3 family.

The protein localises to the secreted. Its function is as follows. Secreted scaffold protein that plays an essential role in dorsoventral patterning during early development. Stabilizes axial formation by restricting chordin (CHRD) activity on the dorsal side. Acts by facilitating the association between the tolloid proteases and their substrate chordin (CHRD), leading to enhance chordin (CHRD) degradation. May have matrix-related function involved in placental and embryonic development, or play a similar role in other physiological processes. This chain is Olfactomedin-like protein 3 (Olfml3), found in Mus musculus (Mouse).